Here is a 362-residue protein sequence, read N- to C-terminus: Phospho-N-acetylmuramoyl-pentapeptide-transferase (362 aa).

A run of 10 helical transmembrane segments spans residues 18 to 38, 73 to 93, 97 to 117, 134 to 154, 160 to 180, 200 to 220, 237 to 257, 264 to 284, 289 to 309, and 339 to 359; these read VFGY…AISL, TMGG…WGDL, YVWV…VDDW, YFWT…SATT, LIVP…FIAL, GLAI…AYVA, AGEL…FLWF, VFMG…IAVV, IVLF…MVQV, and QVVV…LSTL.

This sequence belongs to the glycosyltransferase 4 family. MraY subfamily. Requires Mg(2+) as cofactor.

It is found in the cell inner membrane. The catalysed reaction is UDP-N-acetyl-alpha-D-muramoyl-L-alanyl-gamma-D-glutamyl-meso-2,6-diaminopimeloyl-D-alanyl-D-alanine + di-trans,octa-cis-undecaprenyl phosphate = di-trans,octa-cis-undecaprenyl diphospho-N-acetyl-alpha-D-muramoyl-L-alanyl-D-glutamyl-meso-2,6-diaminopimeloyl-D-alanyl-D-alanine + UMP. It participates in cell wall biogenesis; peptidoglycan biosynthesis. In terms of biological role, catalyzes the initial step of the lipid cycle reactions in the biosynthesis of the cell wall peptidoglycan: transfers peptidoglycan precursor phospho-MurNAc-pentapeptide from UDP-MurNAc-pentapeptide onto the lipid carrier undecaprenyl phosphate, yielding undecaprenyl-pyrophosphoryl-MurNAc-pentapeptide, known as lipid I. This is Phospho-N-acetylmuramoyl-pentapeptide-transferase from Azoarcus sp. (strain BH72).